Consider the following 427-residue polypeptide: UDP-N-acetylglucosamine--N-acetylmuramyl-(pentapeptide) pyrophosphoryl-undecaprenol N-acetylglucosamine transferase (427 aa).

UDP-N-acetyl-alpha-D-glucosamine contacts are provided by residues 29–31 (TGG), asparagine 141, arginine 177, serine 205, isoleucine 258, and glutamine 303. The interval 408-427 (SLHPIPDSRFPIRTSAGGAQ) is disordered.

It belongs to the glycosyltransferase 28 family. MurG subfamily.

It is found in the cell inner membrane. The enzyme catalyses di-trans,octa-cis-undecaprenyl diphospho-N-acetyl-alpha-D-muramoyl-L-alanyl-D-glutamyl-meso-2,6-diaminopimeloyl-D-alanyl-D-alanine + UDP-N-acetyl-alpha-D-glucosamine = di-trans,octa-cis-undecaprenyl diphospho-[N-acetyl-alpha-D-glucosaminyl-(1-&gt;4)]-N-acetyl-alpha-D-muramoyl-L-alanyl-D-glutamyl-meso-2,6-diaminopimeloyl-D-alanyl-D-alanine + UDP + H(+). It participates in cell wall biogenesis; peptidoglycan biosynthesis. Functionally, cell wall formation. Catalyzes the transfer of a GlcNAc subunit on undecaprenyl-pyrophosphoryl-MurNAc-pentapeptide (lipid intermediate I) to form undecaprenyl-pyrophosphoryl-MurNAc-(pentapeptide)GlcNAc (lipid intermediate II). This chain is UDP-N-acetylglucosamine--N-acetylmuramyl-(pentapeptide) pyrophosphoryl-undecaprenol N-acetylglucosamine transferase, found in Xanthomonas campestris pv. campestris (strain B100).